A 245-amino-acid chain; its full sequence is 3-deoxy-manno-octulosonate cytidylyltransferase (245 aa).

This sequence belongs to the KdsB family.

The protein resides in the cytoplasm. The enzyme catalyses 3-deoxy-alpha-D-manno-oct-2-ulosonate + CTP = CMP-3-deoxy-beta-D-manno-octulosonate + diphosphate. It participates in nucleotide-sugar biosynthesis; CMP-3-deoxy-D-manno-octulosonate biosynthesis; CMP-3-deoxy-D-manno-octulosonate from 3-deoxy-D-manno-octulosonate and CTP: step 1/1. Its pathway is bacterial outer membrane biogenesis; lipopolysaccharide biosynthesis. In terms of biological role, activates KDO (a required 8-carbon sugar) for incorporation into bacterial lipopolysaccharide in Gram-negative bacteria. This is 3-deoxy-manno-octulosonate cytidylyltransferase from Fusobacterium nucleatum subsp. nucleatum (strain ATCC 25586 / DSM 15643 / BCRC 10681 / CIP 101130 / JCM 8532 / KCTC 2640 / LMG 13131 / VPI 4355).